Consider the following 352-residue polypeptide: Putative [LysW]-L-2-aminoadipate/[LysW]-L-glutamate phosphate reductase (352 aa).

NADP(+) is bound by residues 10 to 13 and 34 to 36; these read SGFT and SRR. The active site involves Cys151. Residue Asn319 participates in NADP(+) binding.

This sequence belongs to the NAGSA dehydrogenase family. Type 1 subfamily. LysY sub-subfamily.

It localises to the cytoplasm. The catalysed reaction is [amino-group carrier protein]-C-terminal-N-(1-carboxy-5-oxopentan-1-yl)-L-glutamine + phosphate + NADP(+) = [amino-group carrier protein]-C-terminal-N-(1-carboxy-5-phosphooxy-5-oxopentan-1-yl)-L-glutamine + NADPH + H(+). The enzyme catalyses [amino-group carrier protein]-C-terminal-gamma-(L-glutamyl-5-semialdehyde)-L-glutamate + phosphate + NADP(+) = [amino-group carrier protein]-C-terminal-gamma-(5-phospho-L-glutamyl)-L-glutamate + NADPH + H(+). It participates in amino-acid biosynthesis; L-lysine biosynthesis via AAA pathway; L-lysine from L-alpha-aminoadipate (Thermus route): step 3/5. The protein operates within amino-acid biosynthesis; L-arginine biosynthesis. Functionally, involved in both the arginine and lysine biosynthetic pathways. This Pyrobaculum islandicum (strain DSM 4184 / JCM 9189 / GEO3) protein is Putative [LysW]-L-2-aminoadipate/[LysW]-L-glutamate phosphate reductase.